The primary structure comprises 388 residues: Processive diacylglycerol beta-glucosyltransferase (388 aa).

The protein belongs to the glycosyltransferase 28 family. UgtP subfamily.

It is found in the cell membrane. The catalysed reaction is a 1,2-diacyl-3-O-(beta-D-glucopyranosyl)-sn-glycerol + UDP-alpha-D-glucose = a 1,2-diacyl-3-O-(beta-D-Glc-(1-&gt;6)-beta-D-Glc)-sn-glycerol + UDP + H(+). The enzyme catalyses a 1,2-diacyl-3-O-(beta-D-Glc-(1-&gt;6)-beta-D-Glc)-sn-glycerol + UDP-alpha-D-glucose = a 1,2-diacyl-3-O-(beta-D-Glc-(1-&gt;6)-beta-D-Glc-(1-&gt;6)-beta-D-Glc)-sn-glycerol + UDP + H(+). It catalyses the reaction a 1,2-diacyl-sn-glycerol + UDP-alpha-D-glucose = a 1,2-diacyl-3-O-(beta-D-glucopyranosyl)-sn-glycerol + UDP + H(+). It functions in the pathway glycolipid metabolism; diglucosyl-diacylglycerol biosynthesis. Processive glucosyltransferase involved in the biosynthesis of both the bilayer- and non-bilayer-forming membrane glucolipids. Is able to successively transfer up to three glucosyl residues to diacylglycerol (DAG), thereby catalyzing the formation of beta-monoglucosyl-DAG (3-O-(beta-D-glucopyranosyl)-1,2-diacyl-sn-glycerol), beta-diglucosyl-DAG (3-O-(beta-D-glucopyranosyl-beta-(1-&gt;6)-D-glucopyranosyl)-1,2-diacyl-sn-glycerol) and beta-triglucosyl-DAG (3-O-(beta-D-glucopyranosyl-beta-(1-&gt;6)-D-glucopyranosyl-beta-(1-&gt;6)-D-glucopyranosyl)-1,2-diacyl-sn-glycerol). Beta-diglucosyl-DAG is the predominant glycolipid found in Bacillales and is also used as a membrane anchor for lipoteichoic acid (LTA). The protein is Processive diacylglycerol beta-glucosyltransferase of Bacillus cereus (strain ZK / E33L).